The following is a 227-amino-acid chain: MEQPVGQPAYVLHSRAYKETSALVDFFTPQGRVRAVLRRARGKGGSLVRPFVPLEVELRGRSELKNVGRLDSMGIAAWLHGDALFSGLYLNELLMRLLPAEAPQPELFEHYALTLQALAAGRPLEPLLRSFEWRLLEDLGYAFALDHDVSDEPIEADGLYRLQVDAGLERVYLVQPGLFNGAELLALAQADWDAPGALLAAKRLMRQALAVHLGPKPLVSRELFRKR.

Belongs to the RecO family.

In terms of biological role, involved in DNA repair and RecF pathway recombination. The chain is DNA repair protein RecO from Pseudomonas putida (strain W619).